We begin with the raw amino-acid sequence, 490 residues long: MAFKDLRDFIALLEEKGQLKRISHPVDPYLEITEISDRTLRAGGPALLFENVVGHTTPVLANLFGTPDRVAMGMGQENVGALREVGELLAFLKEPEPPKGMKDAWEKLPIFKQVLNMAPKLIKNAPCQEFEVSGEDVDLTAIPIQTCWPGDAAPLVTWPLVVTKGPHKDRQNLGIYRMQLIGKNKLIMRWLSHRGGALDFREWQQQHPGENFPVSVALGADPATILGAVTPVPDTLSEYAFAGLLRGSKTEVTKSRGNDLQVPASAEYILEGHIAPGEMADEGPFGDHTGYYNEVDSFPVFTVERITHRKDPIYHSTYTGRPPDEPAVLGVALNEVFVPILKKQFPEIVDFYLPPEGCSYRMAVVTMKKQYPGHAKRVMLGVWSFLRQFMYTKFVIVTDDDVNARDWNDVIWALTTRVDPMRDTTMIDNTPIDYLDFASPVSGLGSKMGIDATNKWPGETNREWGTTIEMTAEVKNKVDAIWDKLGIDDK.

N172 contributes to the Mn(2+) binding site. Prenylated FMN-binding positions include 175 to 177, 189 to 191, and 194 to 195; these read IYR, RWL, and RG. E238 contacts Mn(2+). D287 (proton donor) is an active-site residue.

It belongs to the UbiD family. In terms of assembly, homohexamer. It depends on prenylated FMN as a cofactor. Requires Mn(2+) as cofactor.

The protein resides in the cell membrane. The catalysed reaction is a 4-hydroxy-3-(all-trans-polyprenyl)benzoate + H(+) = a 2-(all-trans-polyprenyl)phenol + CO2. It functions in the pathway cofactor biosynthesis; ubiquinone biosynthesis. Functionally, catalyzes the decarboxylation of 3-octaprenyl-4-hydroxy benzoate to 2-octaprenylphenol, an intermediate step in ubiquinone biosynthesis. The sequence is that of 3-octaprenyl-4-hydroxybenzoate carboxy-lyase from Saccharophagus degradans (strain 2-40 / ATCC 43961 / DSM 17024).